The primary structure comprises 328 residues: Organic solute transporter alpha-like protein (328 aa).

The Extracellular segment spans residues 1–44; the sequence is MNASENYFTMDPTENISQVLDQNRNNTNSLRTHPTVEEYYENMT. Asn-2, Asn-15, Asn-25, and Asn-42 each carry an N-linked (GlcNAc...) asparagine glycan. A helical transmembrane segment spans residues 45–65; sequence AFLSLAIFIASLLTILNISIF. Residues 66–84 lie on the Cytoplasmic side of the membrane; the sequence is ATTVSRLRRHLDKPLLGPS. A helical membrane pass occupies residues 85–105; sequence IMMVGLYPIISVAALVTILVP. Position 106 (Tyr-106) is a topological domain, extracellular. A helical transmembrane segment spans residues 107-127; it reads SWFICHTVMHVMFMVGGPVFR. Over 128 to 177 the chain is Cytoplasmic; it reads TLLFRYVGSEQNYVKETAGEAVQLNTPPCCCCCLCLPMVIPTKAKLCISR. The helical transmembrane segment at 178–198 threads the bilayer; that stretch reads YMVWQMPFWQGSIMLVMNILY. At 199–208 the chain is on the extracellular side; the sequence is YRDIQLYRQV. The helical transmembrane segment at 209 to 229 threads the bilayer; the sequence is MFFFIPFIVCSIVLGAWSLQI. Residues 230 to 247 lie on the Cytoplasmic side of the membrane; that stretch reads TVRMITKVRGDYQLRKKM. A helical transmembrane segment spans residues 248–265; it reads FCLQLVVMLCKLQYLVLY. The Extracellular segment spans residues 266–287; the sequence is DQLDGIKMGGEYPINHTVYKQT. A glycan (N-linked (GlcNAc...) asparagine) is linked at Asn-280. The helical transmembrane segment at 288 to 308 threads the bilayer; the sequence is IINILILVEMVLVSMMVQSAY. Residues 309–328 lie on the Cytoplasmic side of the membrane; sequence RTPVQVQIDEVNKEKEVTRI.

This sequence belongs to the OST-alpha family.

Its subcellular location is the cell membrane. Its function is as follows. Probable transporter. This chain is Organic solute transporter alpha-like protein, found in Drosophila melanogaster (Fruit fly).